The primary structure comprises 508 residues: GMP synthase [glutamine-hydrolyzing] (508 aa).

Residues 1–189 (MILVLDFGSQ…ALLVCGCEKT (189 aa)) enclose the Glutamine amidotransferase type-1 domain. The active-site Nucleophile is cysteine 78. Residues histidine 163 and glutamate 165 contribute to the active site. One can recognise a GMPS ATP-PPase domain in the interval 190-383 (WGMQHFAQKE…LGISQDFLMR (194 aa)). Position 217–223 (217–223 (SGGVDST)) interacts with ATP.

Homodimer.

It carries out the reaction XMP + L-glutamine + ATP + H2O = GMP + L-glutamate + AMP + diphosphate + 2 H(+). The protein operates within purine metabolism; GMP biosynthesis; GMP from XMP (L-Gln route): step 1/1. Its function is as follows. Catalyzes the synthesis of GMP from XMP. The polypeptide is GMP synthase [glutamine-hydrolyzing] (Helicobacter pylori (strain Shi470)).